Here is a 492-residue protein sequence, read N- to C-terminus: Argininosuccinate lyase (492 aa).

Belongs to the lyase 1 family. Argininosuccinate lyase subfamily.

It is found in the cytoplasm. The catalysed reaction is 2-(N(omega)-L-arginino)succinate = fumarate + L-arginine. The protein operates within amino-acid biosynthesis; L-arginine biosynthesis; L-arginine from L-ornithine and carbamoyl phosphate: step 3/3. This is Argininosuccinate lyase from Methanoculleus marisnigri (strain ATCC 35101 / DSM 1498 / JR1).